Here is a 408-residue protein sequence, read N- to C-terminus: Argininosuccinate synthase (408 aa).

Residues 10–18 (AYSGGLDTS) and Ala37 each bind ATP. Residues Tyr90 and Ser95 each contribute to the L-citrulline site. Gly120 contributes to the ATP binding site. L-aspartate contacts are provided by Thr122, Asn126, and Asp127. Position 126 (Asn126) interacts with L-citrulline. The L-citrulline site is built by Arg130, Ser181, Ser190, Glu266, and Tyr278.

This sequence belongs to the argininosuccinate synthase family. Type 1 subfamily. As to quaternary structure, homotetramer.

It is found in the cytoplasm. The catalysed reaction is L-citrulline + L-aspartate + ATP = 2-(N(omega)-L-arginino)succinate + AMP + diphosphate + H(+). Its pathway is amino-acid biosynthesis; L-arginine biosynthesis; L-arginine from L-ornithine and carbamoyl phosphate: step 2/3. The sequence is that of Argininosuccinate synthase from Laribacter hongkongensis (strain HLHK9).